The following is a 433-amino-acid chain: Serine--tRNA ligase (433 aa).

L-serine is bound at residue 235 to 237 (TSE). Position 266–268 (266–268 (RSE)) interacts with ATP. An L-serine-binding site is contributed by Glu-289. Residue 353–356 (EISS) coordinates ATP. Ser-388 contacts L-serine.

The protein belongs to the class-II aminoacyl-tRNA synthetase family. Type-1 seryl-tRNA synthetase subfamily. In terms of assembly, homodimer. The tRNA molecule binds across the dimer.

The protein localises to the cytoplasm. It catalyses the reaction tRNA(Ser) + L-serine + ATP = L-seryl-tRNA(Ser) + AMP + diphosphate + H(+). The catalysed reaction is tRNA(Sec) + L-serine + ATP = L-seryl-tRNA(Sec) + AMP + diphosphate + H(+). Its pathway is aminoacyl-tRNA biosynthesis; selenocysteinyl-tRNA(Sec) biosynthesis; L-seryl-tRNA(Sec) from L-serine and tRNA(Sec): step 1/1. Functionally, catalyzes the attachment of serine to tRNA(Ser). Is also able to aminoacylate tRNA(Sec) with serine, to form the misacylated tRNA L-seryl-tRNA(Sec), which will be further converted into selenocysteinyl-tRNA(Sec). The polypeptide is Serine--tRNA ligase (Burkholderia cenocepacia (strain HI2424)).